Here is a 545-residue protein sequence, read N- to C-terminus: Membrane protein insertase YidC (545 aa).

The chain crosses the membrane as a helical span at residues 6–26 (FVLFVFFIFLSFLLWEQWQID). The tract at residues 32 to 69 (QAVAQTDGASRPAGDLPQRPSDDESDVTVHTEAPTQEG) is disordered. Helical transmembrane passes span 354–374 (FFNN…ALFF), 425–445 (GGCL…WVLV), 462–482 (LSSK…MFIQ), and 500–520 (FFPL…VLYW).

It belongs to the OXA1/ALB3/YidC family. Type 1 subfamily. In terms of assembly, interacts with the Sec translocase complex via SecD. Specifically interacts with transmembrane segments of nascent integral membrane proteins during membrane integration.

The protein resides in the cell inner membrane. Functionally, required for the insertion and/or proper folding and/or complex formation of integral membrane proteins into the membrane. Involved in integration of membrane proteins that insert both dependently and independently of the Sec translocase complex, as well as at least some lipoproteins. Aids folding of multispanning membrane proteins. The chain is Membrane protein insertase YidC from Methylococcus capsulatus (strain ATCC 33009 / NCIMB 11132 / Bath).